The sequence spans 122 residues: LYR motif-containing protein 1 (122 aa).

Belongs to the complex I LYR family.

This is LYR motif-containing protein 1 (lyrm1) from Xenopus laevis (African clawed frog).